The following is a 249-amino-acid chain: DNA repair protein RecO (249 aa).

This sequence belongs to the RecO family.

Functionally, involved in DNA repair and RecF pathway recombination. This chain is DNA repair protein RecO, found in Polaromonas naphthalenivorans (strain CJ2).